We begin with the raw amino-acid sequence, 211 residues long: Calaxin (211 aa).

EF-hand domains follow at residues 64 to 99 (TDDMIMDRVFRGFDKDNDGCVNVLEWIHGLSLFLRG), 100 to 135 (SLEEKMKYCFEVFDLNGDGFISKEEMFHMLKNSLLK), and 145 to 180 (GIKDLVEITLKKMDHDHDGKLSFADYELAVREETLL). Ca(2+) contacts are provided by Asp77, Asp79, Asp81, Cys83, Glu88, Asp113, Asn115, Asp117, Glu124, Asp158, Asp160, Asp162, Lys164, and Asp169.

In terms of assembly, component of the outer dynein arm-docking complex along with ODAD1, ODAD2, ODAD3 and ODAD4. In terms of tissue distribution, strong expression in the respiratory epithelium. Expressed in the sperm.

The protein resides in the cytoplasm. Its subcellular location is the cytoskeleton. It localises to the cilium axoneme. It is found in the cell projection. The protein localises to the cilium. The protein resides in the flagellum. Its function is as follows. Component of the outer dynein arm-docking complex (ODA-DC) that mediates outer dynein arms (ODA) binding onto the doublet microtubule. Seems to regulate the assembly of both ODAs and their axonemal docking complex onto ciliary microtubules. Regulates ciliary and flagellar motility and is required for cilia-driven determination of body laterality. The protein is Calaxin of Homo sapiens (Human).